Here is a 569-residue protein sequence, read N- to C-terminus: Adenine deaminase 1 (569 aa).

The protein belongs to the metallo-dependent hydrolases superfamily. Adenine deaminase family. Mn(2+) serves as cofactor.

The catalysed reaction is adenine + H2O + H(+) = hypoxanthine + NH4(+). In Rhizobium johnstonii (strain DSM 114642 / LMG 32736 / 3841) (Rhizobium leguminosarum bv. viciae), this protein is Adenine deaminase 1.